Consider the following 181-residue polypeptide: MAENQNNLIWIDLEMTGLDPERDRIIEIATLVTDANLNILAEGPVLAVHQSAEQLGLMDEWNVRTHTGSGLVERVKTSPFNDRDAELQTIEFLKQWVPAGVSPICGNSVGQDRRFLFRYMPELEAYFHYRYVDVSTLKELARRWKPEILAGFKKQNTHQALDDIRESVAELAYYREHFIQS.

Positions Leu8–Leu171 constitute an Exonuclease domain. Tyr129 is an active-site residue.

The protein belongs to the oligoribonuclease family.

Its subcellular location is the cytoplasm. In terms of biological role, 3'-to-5' exoribonuclease specific for small oligoribonucleotides. The protein is Oligoribonuclease of Yersinia pseudotuberculosis serotype O:1b (strain IP 31758).